The chain runs to 418 residues: uncharacterized protein (418 aa).

Residues 282–297 are compositionally biased toward basic and acidic residues; that stretch reads EEHSSIAKLDSEEKIR. Residues 282–346 form a disordered region; that stretch reads EEHSSIAKLD…SASVDDVSEE (65 aa). The span at 304 to 316 shows a compositional bias: low complexity; sequence SSTSLSPDPTSDN. Residues 322–337 are compositionally biased toward polar residues; that stretch reads WVSSQDTSKNSSNLAS.

This is an uncharacterized protein from Schizosaccharomyces pombe (strain 972 / ATCC 24843) (Fission yeast).